The following is a 343-amino-acid chain: Serine/threonine-protein kinase SRK2C (343 aa).

One can recognise a Protein kinase domain in the interval 4–260; it reads YEIVKDIGSG…IEEIKNHSWF (257 aa). ATP contacts are provided by residues 10 to 18 and Lys33; that span reads IGSGNFGVA. Asp123 acts as the Proton acceptor in catalysis. Thr158 carries the phosphothreonine modification.

The protein belongs to the protein kinase superfamily. Ser/Thr protein kinase family. In terms of assembly, interacts with I-2 and TOPP1. In terms of tissue distribution, expressed in seedlings.

It catalyses the reaction L-seryl-[protein] + ATP = O-phospho-L-seryl-[protein] + ADP + H(+). It carries out the reaction L-threonyl-[protein] + ATP = O-phospho-L-threonyl-[protein] + ADP + H(+). Its function is as follows. Involved in gene regulation and confers tolerance to drought and osmotic stress. The protein is Serine/threonine-protein kinase SRK2C (SRK2C) of Arabidopsis thaliana (Mouse-ear cress).